The primary structure comprises 336 residues: Dihydroorotate dehydrogenase (quinone) (336 aa).

FMN is bound by residues 62–66 (AGLDK) and Thr86. Lys66 provides a ligand contact to substrate. 111–115 (NRMGF) provides a ligand contact to substrate. Positions 139 and 172 each coordinate FMN. Asn172 is a binding site for substrate. Catalysis depends on Ser175, which acts as the Nucleophile. A substrate-binding site is contributed by Asn177. FMN is bound by residues Lys217 and Thr245. A substrate-binding site is contributed by 246–247 (NT). FMN is bound by residues Gly268, Gly297, and 318 to 319 (YS).

It belongs to the dihydroorotate dehydrogenase family. Type 2 subfamily. In terms of assembly, monomer. FMN serves as cofactor.

It localises to the cell membrane. It catalyses the reaction (S)-dihydroorotate + a quinone = orotate + a quinol. It functions in the pathway pyrimidine metabolism; UMP biosynthesis via de novo pathway; orotate from (S)-dihydroorotate (quinone route): step 1/1. In terms of biological role, catalyzes the conversion of dihydroorotate to orotate with quinone as electron acceptor. The protein is Dihydroorotate dehydrogenase (quinone) of Salmonella arizonae (strain ATCC BAA-731 / CDC346-86 / RSK2980).